Reading from the N-terminus, the 513-residue chain is ATP synthase subunit alpha (513 aa).

171-178 (GDRQIGKT) contacts ATP.

The protein belongs to the ATPase alpha/beta chains family. As to quaternary structure, F-type ATPases have 2 components, CF(1) - the catalytic core - and CF(0) - the membrane proton channel. CF(1) has five subunits: alpha(3), beta(3), gamma(1), delta(1), epsilon(1). CF(0) has three main subunits: a(1), b(2) and c(9-12). The alpha and beta chains form an alternating ring which encloses part of the gamma chain. CF(1) is attached to CF(0) by a central stalk formed by the gamma and epsilon chains, while a peripheral stalk is formed by the delta and b chains.

Its subcellular location is the cell membrane. The catalysed reaction is ATP + H2O + 4 H(+)(in) = ADP + phosphate + 5 H(+)(out). In terms of biological role, produces ATP from ADP in the presence of a proton gradient across the membrane. The alpha chain is a regulatory subunit. This is ATP synthase subunit alpha from Wolbachia pipientis wMel.